The chain runs to 349 residues: Actin cytoskeleton-regulatory complex protein END3 (349 aa).

EH domains are found at residues 8 to 98 and 130 to 222; these read EIKK…SKVN and DLNQ…CNKK. The 36-residue stretch at 40 to 75 folds into the EF-hand 1 domain; that stretch reads LDSSVLNKIWFLADIDDDDNLDFEEFVICMRLIFDM. 5 residues coordinate Ca(2+): aspartate 53, aspartate 55, aspartate 57, asparagine 59, and glutamate 64. The tract at residues 96 to 105 is polyphosphoinositide (PIP2)-binding; the sequence is KVNLIKERKK. Residues 146–164 enclose the EF-hand 2 domain; the sequence is DGTITFNELSTKLSTKFFN. The interval 226 to 265 is disordered; that stretch reads YDLRSSQPPTKRKEEANEVDNLRDNGQNSSSDSSGSNVLS. Residues 236-248 are compositionally biased toward basic and acidic residues; that stretch reads KRKEEANEVDNLR. Residues 249-265 show a composition bias toward low complexity; the sequence is DNGQNSSSDSSGSNVLS. A Phosphoserine modification is found at serine 276. 2 tandem repeats follow at residues 276-295 and 315-334. The segment at 276 to 334 is 2 X 20 AA approximate repeats; that stretch reads SLTDDQVANMREQLEGLLNYKKSEKTQGGSKLSKRINIRSITDDLDNIEQQVEVLENYL. Residues 307–349 are a coiled coil; sequence LSKRINIRSITDDLDNIEQQVEVLENYLNNKRHELQALQAEIN.

The protein belongs to the END3 family. As to quaternary structure, component of the PAN1 actin cytoskeleton-regulatory complex composed of at least END3, PAN1, and SLA1. Interacts with SCD5, SLA2 and YAP1802. Interacts directly with PAN1; the interaction with PAN1 is prevented by PAN1 phosphorylation by PKR1.

The protein resides in the cell membrane. Its subcellular location is the endosome membrane. It localises to the cytoplasm. It is found in the cytoskeleton. The protein localises to the actin patch. In terms of biological role, component of the PAN1 actin cytoskeleton-regulatory complex required for the internalization of endosomes during actin-coupled endocytosis. The complex links the site of endocytosis to the cell membrane-associated actin cytoskeleton. Mediates uptake of external molecules and vacuolar degradation of plasma membrane proteins. Plays a role in the proper organization of the cell membrane-associated actin cytoskeleton and promotes its destabilization. END3 regulates PAN1 function by preventing phosphorylation of PAN1 by PKR1 and is also involved in the correct localization of SLA1 to the cell cortex, in the bipolar budding of diploid cells and the correct distribution of chitin at the cell surface. The polypeptide is Actin cytoskeleton-regulatory complex protein END3 (END3) (Saccharomyces cerevisiae (strain ATCC 204508 / S288c) (Baker's yeast)).